Reading from the N-terminus, the 130-residue chain is Small ribosomal subunit protein uS11c (130 aa).

Belongs to the universal ribosomal protein uS11 family. As to quaternary structure, part of the 30S ribosomal subunit.

The protein resides in the plastid. It is found in the chloroplast. The chain is Small ribosomal subunit protein uS11c from Guillardia theta (Cryptophyte).